Consider the following 175-residue polypeptide: MRLPGRHVLYALSAVTMLAACSSNGARGGIASTNMNPTNPPATAETATVSPTPAPQSARTETWINLQVGDCLADLPPADLSRITVTIVDCATAHSAEVYLRAPVAVDAAVVSMANRDCAAGFAPYTGQSVDTSPYSVAYLIDSHQDRTGADPTPSTVICLLQPANGQLLTGSARR.

The N-terminal stretch at 1–20 (MRLPGRHVLYALSAVTMLAA) is a signal peptide. Cys-21 carries N-palmitoyl cysteine lipidation. Cys-21 carries the S-diacylglycerol cysteine lipid modification. A disordered region spans residues 31–56 (ASTNMNPTNPPATAETATVSPTPAPQ). A compositionally biased stretch (low complexity) spans 33 to 48 (TNMNPTNPPATAETAT). Prevents bacterial uptake by a human macrophage-like cell line stretches follow at residues 61–80 (ETWINLQVGDCLADLPPADL), 101–120 (RAPVAVDAAVVSMANRDCAA), and 121–140 (GFAPYTGQSVDTSPYSVAYL).

Its subcellular location is the cell membrane. It is found in the cell surface. Its function is as follows. Probably involved in bacterial recognition and uptake by its host (human). This is Putative lipoprotein LppN (lppN) from Mycobacterium tuberculosis (strain ATCC 25618 / H37Rv).